The primary structure comprises 166 residues: Ubiquitin-fold modifier-conjugating enzyme 1 (166 aa).

Cysteine 116 acts as the Glycyl thioester intermediate in catalysis.

Belongs to the ubiquitin-conjugating enzyme family. UFC1 subfamily.

Its function is as follows. E2-like enzyme which forms an intermediate with UFM1 via a thioester linkage. The polypeptide is Ubiquitin-fold modifier-conjugating enzyme 1 (Monosiga brevicollis (Choanoflagellate)).